Reading from the N-terminus, the 345-residue chain is Uroporphyrinogen decarboxylase (345 aa).

Substrate is bound by residues 23–27, Asp73, Tyr149, Thr203, and His319; that span reads RQAGR.

Belongs to the uroporphyrinogen decarboxylase family. As to quaternary structure, homodimer.

Its subcellular location is the cytoplasm. The enzyme catalyses uroporphyrinogen III + 4 H(+) = coproporphyrinogen III + 4 CO2. The protein operates within porphyrin-containing compound metabolism; protoporphyrin-IX biosynthesis; coproporphyrinogen-III from 5-aminolevulinate: step 4/4. Its function is as follows. Catalyzes the decarboxylation of four acetate groups of uroporphyrinogen-III to yield coproporphyrinogen-III. This chain is Uroporphyrinogen decarboxylase, found in Vesicomyosocius okutanii subsp. Calyptogena okutanii (strain HA).